The sequence spans 266 residues: Gasdermin bGSDM (266 aa).

The S-palmitoyl cysteine moiety is linked to residue Cys-4. 4 consecutive transmembrane segments (beta stranded) span residues 69 to 85, 97 to 114, 163 to 180, and 189 to 205; these read INGQKTENLSFSIGINI, AGIEAQYNQARKVRFEFS, EFTVAAEKSGGGSIQLDV, and GKLKVEASVSSQSTVTY. Residues 238-266 are C-terminal region; it reads AMALDAAGGVMPSDSALLDEGGLLDLEGF.

This sequence belongs to the bacterial gasdermin family. Monomer in solution. In terms of assembly, homooligomer; forms homooligomeric ring-shaped pores when inserted in membranes with 48-54 subunits per ring. In terms of processing, palmitoylation helps stabilize the inactive state; may self palmitoylate. Palmitoylation plays a significant role in pore formation.

The protein resides in the cytoplasm. The protein localises to the cell inner membrane. With respect to regulation, the full-length protein before cleavage is inactive: intramolecular interactions between the N-terminal domain and the C-terminal region as well as the lipid modification, mediate autoinhibition. The pyroptosis-like-inducing activity is carried by the released N-terminal domain (Gasdermin bGSDM, N-terminus). In terms of biological role, precursor of a pore-forming protein involved in defense against bacteriophages. Expression of bGSDM and the neighboring protease gene (Ga0334635_1659) is toxic in E.coli. Cleavage of this precursor by its dedicated protease releases the active moiety (gasdermin bGSDM, N-terminus) which inserts into membranes, forming pores and triggering cell death. Its function is as follows. Pore-forming protein that causes membrane permeabilization, probably via a pyroptosis-like activity. Makes ring-like pores with an interior pore diameter of 200-300 Angstroms, when integrated in liposomes. The polypeptide is Gasdermin bGSDM (Vitiosangium sp. (strain GDMCC 1.1324)).